Consider the following 192-residue polypeptide: Erythropoietin (192 aa).

An N-terminal signal peptide occupies residues 1–27 (MGVHECPAWLWLLLSLVSLPLGLPVPG). Cystine bridges form between cysteine 34–cysteine 187 and cysteine 56–cysteine 60. Asparagine 51 carries N-linked (GlcNAc...) asparagine glycosylation. Asparagine 65 and asparagine 110 each carry an N-linked (GlcNAc...) asparagine glycan. The O-linked (GalNAc...) serine glycan is linked to serine 152.

Belongs to the EPO/TPO family. As to expression, produced by kidney or liver of adult mammals and by liver of fetal or neonatal mammals.

The protein localises to the secreted. Hormone involved in the regulation of erythrocyte proliferation and differentiation and the maintenance of a physiological level of circulating erythrocyte mass. Binds to EPOR leading to EPOR dimerization and JAK2 activation thereby activating specific downstream effectors, including STAT1 and STAT3. The protein is Erythropoietin (EPO) of Macaca fascicularis (Crab-eating macaque).